A 400-amino-acid polypeptide reads, in one-letter code: Large envelope protein (400 aa).

Met-1 is modified (N-acetylmethionine). A lipid anchor (N-myristoyl glycine; by host) is attached at Gly-2. The interval 2 to 119 (GAPLSTTRRG…PPLRDTHPQA (118 aa)) is pre-S1. The segment at 2–174 (GAPLSTTRRG…SSKTGGPAMN (173 aa)) is pre-S. At 2-181 (GAPLSTTRRG…AMNMENITSG (180 aa)) the chain is on the virion surface; in external conformation side. At 2 to 253 (GAPLSTTRRG…PGYRWMCLRR (252 aa)) the chain is on the intravirion; in internal conformation side. The N-linked (GlcNAc...) asparagine glycan is linked to Pro-4. Residues 84–110 (VLTTLPADPPPASTNRLSGRKPTQVSP) form a disordered region. The segment covering 96–109 (STNRLSGRKPTQVS) has biased composition (polar residues). Positions 120 to 174 (MQWNSTHFHQALLDPRVRALYFPAGGSSSGTQNPAPTIASLTSSISSKTGGPAMN) are pre-S2. A helical transmembrane segment spans residues 182 to 202 (LLGPLRVLQAVCFLLTKILTI). Residues 203–253 (PQSLDSWWTSLNFLGGLPRCPGQNSQSPTSNHLPTSCPPTCPGYRWMCLRR) are Intravirion; in external conformation-facing. A helical membrane pass occupies residues 254–274 (FIIFLFILLLCLIFLLVLLDY). Over 275 to 348 (QGMLPVCPLL…WASARFSWLS (74 aa)) the chain is Virion surface. Asn-320 carries an N-linked (GlcNAc...) asparagine; by host glycan. The helical transmembrane segment at 349–369 (LLVQFVQWCVGLSPTVWLLVI) threads the bilayer. The Intravirion segment spans residues 370–375 (WMIWYW). The helical transmembrane segment at 376–398 (GPNLCSILSPFIPLLPIFCYLWV) threads the bilayer. Residues 399 to 400 (SI) are Virion surface-facing.

Belongs to the orthohepadnavirus major surface antigen family. In its internal form (Li-HBsAg), interacts with the capsid protein and with the isoform S. Interacts with host chaperone CANX. In terms of assembly, associates with host chaperone CANX through its pre-S2 N glycan; this association may be essential for isoform M proper secretion. As to quaternary structure, interacts with isoform L. Interacts with the antigens of satellite virus HDV (HDVAgs); this interaction is required for encapsidation of HDV genomic RNA. Isoform M is N-terminally acetylated by host at a ratio of 90%, and N-glycosylated by host at the pre-S2 region. In terms of processing, myristoylated.

Its subcellular location is the virion membrane. The large envelope protein exists in two topological conformations, one which is termed 'external' or Le-HBsAg and the other 'internal' or Li-HBsAg. In its external conformation the protein attaches the virus to cell receptors and thereby initiating infection. This interaction determines the species specificity and liver tropism. This attachment induces virion internalization predominantly through caveolin-mediated endocytosis. The large envelope protein also assures fusion between virion membrane and endosomal membrane. In its internal conformation the protein plays a role in virion morphogenesis and mediates the contact with the nucleocapsid like a matrix protein. Functionally, the middle envelope protein plays an important role in the budding of the virion. It is involved in the induction of budding in a nucleocapsid independent way. In this process the majority of envelope proteins bud to form subviral lipoprotein particles of 22 nm of diameter that do not contain a nucleocapsid. The polypeptide is Large envelope protein (Homo sapiens (Human)).